We begin with the raw amino-acid sequence, 556 residues long: Membrane protein insertase YidC (556 aa).

Helical transmembrane passes span 6 to 26 (IVLYMALALIGLSLWNAWQID), 332 to 352 (LDLTVDYGILWFLSSLLFSLM), 358 to 378 (VVGNWGWSIVLVTVLIKLAFY), 428 to 448 (LGGCLPILIQIPVFIALYWVL), and 501 to 521 (VMMFLPILFTGLFWNFPSGLV).

It belongs to the OXA1/ALB3/YidC family. Type 1 subfamily. In terms of assembly, interacts with the Sec translocase complex via SecD. Specifically interacts with transmembrane segments of nascent integral membrane proteins during membrane integration.

It localises to the cell inner membrane. Its function is as follows. Required for the insertion and/or proper folding and/or complex formation of integral membrane proteins into the membrane. Involved in integration of membrane proteins that insert both dependently and independently of the Sec translocase complex, as well as at least some lipoproteins. Aids folding of multispanning membrane proteins. The sequence is that of Membrane protein insertase YidC from Legionella pneumophila (strain Paris).